The chain runs to 1600 residues: A disintegrin and metalloproteinase with thrombospondin motifs 12 (1600 aa).

Residues 1-25 (MPCARGSWLAKLSIVAQLINFGAFC) form the signal peptide. The propeptide occupies 26-244 (HGRQTQPWPV…TLRSRSLSRR (219 aa)). Asn-105 carries N-linked (GlcNAc...) asparagine glycosylation. Residues 210–217 (PICGLKDS) carry the Cysteine switch motif. Cys-212 serves as a coordination point for Zn(2+). In terms of domain architecture, Peptidase M12B spans 250–460 (RWVETLVVAD…GRGFCLDDIP (211 aa)). 11 disulfide bridges follow: Cys-326–Cys-380, Cys-355–Cys-362, Cys-374–Cys-455, Cys-413–Cys-439, Cys-482–Cys-505, Cys-493–Cys-511, Cys-500–Cys-530, Cys-524–Cys-535, Cys-558–Cys-595, Cys-562–Cys-600, and Cys-573–Cys-585. His-396 provides a ligand contact to Zn(2+). Glu-397 is a catalytic residue. The Zn(2+) site is built by His-400 and His-406. Positions 469–548 (VIAPGVIYDV…GKKPESIPGG (80 aa)) constitute a Disintegrin domain. 4 TSP type-1 domains span residues 546 to 601 (PGGW…HPCR), 827 to 887 (KLLY…KDCP), 891 to 947 (WAGE…RDIL), and 948 to 1001 (CPSD…QQCP). The interval 705–831 (CQTVKKLFRQ…DNDVEKLLYF (127 aa)) is spacer 1. The tract at residues 1001 to 1321 (PFSRRVLKPN…HLMKDHSPAY (321 aa)) is spacer 2. 2 disordered regions span residues 1006–1140 (VLKP…LSSS) and 1158–1179 (PEVE…KDKS). Residues 1038–1047 (PTPLSTPTVP) show a composition bias toward low complexity. The span at 1048-1107 (ESMSTSTPTINSLGSTIASQEDANGMGWQNNSTQAEEGSHFPTSSGSTSQVPVTSWSLSI) shows a compositional bias: polar residues. A compositionally biased stretch (low complexity) spans 1130-1140 (TTTSDSGLSSS). 4 consecutive TSP type-1 domains span residues 1318–1371 (SPAY…RPCA), 1373–1428 (WRVG…CNLE), 1429–1477 (PCGE…NRHL), and 1478–1538 (CCHW…QACR). Positions 1541 to 1581 (ADLTCLKDRLSISFCQTLKSMRKCSVPSVRAQCCLSCPQAP) constitute a PLAC domain.

In terms of assembly, interacts with COMP. It depends on Zn(2+) as a cofactor. The precursor is cleaved by a furin endopeptidase. In terms of processing, subjected to an intracellular maturation process yielding a 120 kDa N-terminal fragment containing the metalloproteinase, disintegrin, one TSP type-1 and the Cys-rich domains and a 83 kDa C-terminal fragment containing the spacer 2 and four TSP type-1 domains. Post-translationally, glycosylated. Can be O-fucosylated by POFUT2 on a serine or a threonine residue found within the consensus sequence C1-X(2)-(S/T)-C2-G of the TSP type-1 repeat domains where C1 and C2 are the first and second cysteine residue of the repeat, respectively. Fucosylated repeats can then be further glycosylated by the addition of a beta-1,3-glucose residue by the glucosyltransferase, B3GALTL. Fucosylation mediates the efficient secretion of ADAMTS family members. Can also be C-glycosylated with one or two mannose molecules on tryptophan residues within the consensus sequence W-X-X-W of the TPRs, and N-glycosylated. These other glycosylations can also facilitate secretion.

It is found in the secreted. The protein resides in the extracellular space. Its subcellular location is the extracellular matrix. Its activity is regulated as follows. Inhibited by alpha-2 macroglobulin. In terms of biological role, metalloprotease that plays a role in the degradation of COMP. Also cleaves alpha-2 macroglobulin and aggregan. Has anti-tumorigenic properties. This is A disintegrin and metalloproteinase with thrombospondin motifs 12 (Adamts12) from Mus musculus (Mouse).